The primary structure comprises 354 residues: uncharacterized protein (354 aa).

A run of 9 helical transmembrane segments spans residues 9-29 (MGKI…LIFS), 31-51 (ISIN…ISFT), 76-96 (NFGI…LIWV), 109-129 (FLNV…AIVV), 144-164 (IIFS…VLLI), 185-205 (GILV…ALGV), 278-298 (YGTL…GFFY), 306-326 (GIYL…IESG), and 327-347 (ILDI…IYAI).

It is found in the cell membrane. This is an uncharacterized protein from Methanocaldococcus jannaschii (strain ATCC 43067 / DSM 2661 / JAL-1 / JCM 10045 / NBRC 100440) (Methanococcus jannaschii).